The sequence spans 1068 residues: Carbamoyl phosphate synthase large chain (1068 aa).

A carboxyphosphate synthetic domain region spans residues 1–401 (MPRRTDLHRI…SLLKAVRSLE (401 aa)). Residues arginine 129, arginine 169, glycine 175, glycine 176, glutamine 208, isoleucine 210, glutamate 215, glycine 241, valine 242, histidine 243, glutamine 284, and glutamate 298 each coordinate ATP. Residues 133–327 (KQLMDELGQP…IAKIAAKIAV (195 aa)) form the ATP-grasp 1 domain. 3 residues coordinate Mg(2+): glutamine 284, glutamate 298, and asparagine 300. Glutamine 284, glutamate 298, and asparagine 300 together coordinate Mn(2+). The segment at 402–546 (IGVDHLALRE…YSTYEMENES (145 aa)) is oligomerization domain. The tract at residues 547–935 (KKSQRPSVLV…ALYKVFEAAN (389 aa)) is carbamoyl phosphate synthetic domain. The ATP-grasp 2 domain maps to 671–867 (ESLLAELGIP…MAEVATRIIL (197 aa)). Residues arginine 707, arginine 746, leucine 748, glutamate 752, glycine 777, valine 778, histidine 779, serine 780, glutamine 820, and glutamate 838 each coordinate ATP. Residues glutamine 820, glutamate 838, and asparagine 840 each contribute to the Mg(2+) site. 3 residues coordinate Mn(2+): glutamine 820, glutamate 838, and asparagine 840. The 133-residue stretch at 936–1068 (LHVPEYGKIL…ESRVFSTESI (133 aa)) folds into the MGS-like domain. An allosteric domain region spans residues 936-1068 (LHVPEYGKIL…ESRVFSTESI (133 aa)).

The protein belongs to the CarB family. Composed of two chains; the small (or glutamine) chain promotes the hydrolysis of glutamine to ammonia, which is used by the large (or ammonia) chain to synthesize carbamoyl phosphate. Tetramer of heterodimers (alpha,beta)4. It depends on Mg(2+) as a cofactor. Mn(2+) is required as a cofactor.

It carries out the reaction hydrogencarbonate + L-glutamine + 2 ATP + H2O = carbamoyl phosphate + L-glutamate + 2 ADP + phosphate + 2 H(+). It catalyses the reaction hydrogencarbonate + NH4(+) + 2 ATP = carbamoyl phosphate + 2 ADP + phosphate + 2 H(+). The protein operates within amino-acid biosynthesis; L-arginine biosynthesis; carbamoyl phosphate from bicarbonate: step 1/1. Its pathway is pyrimidine metabolism; UMP biosynthesis via de novo pathway; (S)-dihydroorotate from bicarbonate: step 1/3. Its function is as follows. Large subunit of the glutamine-dependent carbamoyl phosphate synthetase (CPSase). CPSase catalyzes the formation of carbamoyl phosphate from the ammonia moiety of glutamine, carbonate, and phosphate donated by ATP, constituting the first step of 2 biosynthetic pathways, one leading to arginine and/or urea and the other to pyrimidine nucleotides. The large subunit (synthetase) binds the substrates ammonia (free or transferred from glutamine from the small subunit), hydrogencarbonate and ATP and carries out an ATP-coupled ligase reaction, activating hydrogencarbonate by forming carboxy phosphate which reacts with ammonia to form carbamoyl phosphate. The chain is Carbamoyl phosphate synthase large chain from Cutibacterium acnes (strain DSM 16379 / KPA171202) (Propionibacterium acnes).